We begin with the raw amino-acid sequence, 1039 residues long: DIS3-like exonuclease 1 (1039 aa).

The CSD1 domain maps to 221-309; that stretch reads PEHLPLEILE…KGRNGALCEN (89 aa). A CSD2 domain is found at 359–425; sequence VLVMPWDYRI…AEIATILVEN (67 aa). In terms of domain architecture, RNB spans 458–807; that stretch reads RLDLRKTHLV…VHRLLLAAVN (350 aa).

The protein belongs to the RNR ribonuclease family. As to quaternary structure, component of the RNA exosome complex. The cofactor is Mg(2+).

Its subcellular location is the cytoplasm. It catalyses the reaction Exonucleolytic cleavage in the 3'- to 5'-direction to yield nucleoside 5'-phosphates.. Catalytic component of the RNA exosome complex which has 3'-&gt;5' exoribonuclease activity and participates in a multitude of cellular RNA processing and degradation events. The chain is DIS3-like exonuclease 1 (dis3l) from Xenopus tropicalis (Western clawed frog).